The sequence spans 303 residues: GTPase Era (303 aa).

An Era-type G domain is found at 9–176; the sequence is KSGFVSIIGR…VEQIVEHMEE (168 aa). The tract at residues 17 to 24 is G1; the sequence is GRPNVGKS. 17 to 24 provides a ligand contact to GTP; that stretch reads GRPNVGKS. The interval 43 to 47 is G2; it reads QTTRN. Residues 64–67 form a G3 region; the sequence is DTPG. GTP is bound by residues 64–68 and 126–129; these read DTPGI and NKID. Positions 126–129 are G4; the sequence is NKID. The tract at residues 155 to 157 is G5; sequence ISA. Positions 199–284 constitute a KH type-2 domain; sequence IREKVLHLTK…YLELWVKVQK (86 aa).

Belongs to the TRAFAC class TrmE-Era-EngA-EngB-Septin-like GTPase superfamily. Era GTPase family. Monomer.

It is found in the cytoplasm. The protein localises to the cell membrane. Functionally, an essential GTPase that binds both GDP and GTP, with rapid nucleotide exchange. Plays a role in 16S rRNA processing and 30S ribosomal subunit biogenesis and possibly also in cell cycle regulation and energy metabolism. This is GTPase Era from Shouchella clausii (strain KSM-K16) (Alkalihalobacillus clausii).